The following is a 338-amino-acid chain: Lipoate-protein ligase A (338 aa).

One can recognise a BPL/LPL catalytic domain in the interval 29 to 216 (PATQRVLFLW…AFFEHYSERV (188 aa)). Residues Arg71, 76 to 79 (GAVF), and Lys134 each bind ATP. Residue Lys134 participates in (R)-lipoate binding.

The protein belongs to the LplA family. In terms of assembly, monomer.

The protein resides in the cytoplasm. It catalyses the reaction L-lysyl-[lipoyl-carrier protein] + (R)-lipoate + ATP = N(6)-[(R)-lipoyl]-L-lysyl-[lipoyl-carrier protein] + AMP + diphosphate + H(+). It functions in the pathway protein modification; protein lipoylation via exogenous pathway; protein N(6)-(lipoyl)lysine from lipoate: step 1/2. It participates in protein modification; protein lipoylation via exogenous pathway; protein N(6)-(lipoyl)lysine from lipoate: step 2/2. Catalyzes both the ATP-dependent activation of exogenously supplied lipoate to lipoyl-AMP and the transfer of the activated lipoyl onto the lipoyl domains of lipoate-dependent enzymes. This chain is Lipoate-protein ligase A, found in Enterobacter sp. (strain 638).